We begin with the raw amino-acid sequence, 461 residues long: mRNA cap guanine-N(7) methyltransferase (461 aa).

The segment at 1 to 117 (MESSVKASVD…RKLQPQDALE (117 aa)) is disordered. A phosphoserine mark is found at Ser11, Ser15, Ser16, and Ser58. Polar residues-rich tracts occupy residues 14–29 (ESSP…SGQR) and 49–58 (EQNSSYVQDS). Positions 65-93 (LDVEIILDEKHSEDDGGASKRSKLERGGG) are enriched in basic and acidic residues. Ser94 and Ser99 each carry phosphoserine. The Nuclear localization signal motif lies at 107-109 (KRK). The mRNA cap 0 methyltransferase domain occupies 152 to 460 (SRIFYLRNFN…IYLVFAFEKQ (309 aa)). 161-162 (NN) provides a ligand contact to mRNA. 6 residues coordinate S-adenosyl-L-methionine: Lys165, Gly190, Asp212, Asp246, Gln269, and Tyr274.

This sequence belongs to the class I-like SAM-binding methyltransferase superfamily. mRNA cap 0 methyltransferase family. As to quaternary structure, interacts with importin alpha, leading to stimulate both RNA-binding and methyltransferase activity. Interaction with importin alpha and beta is required for its nuclear localization, importin beta dissociating in response to RanGTP, allowing RNMT-importin alpha to bind RNA substrates. Interacts with elongating form of polymerase II and RNGTT. Interacts with RAMAC, this interaction significantly enhances RNA-binding and cap methyltransferase activity.

The protein resides in the nucleus. The enzyme catalyses a 5'-end (5'-triphosphoguanosine)-ribonucleoside in mRNA + S-adenosyl-L-methionine = a 5'-end (N(7)-methyl 5'-triphosphoguanosine)-ribonucleoside in mRNA + S-adenosyl-L-homocysteine. Its activity is regulated as follows. Methyltransferase activity is activated by RAMAC. Catalytic subunit of the mRNA-capping methyltransferase RNMT:RAMAC complex that methylates the N7 position of the added guanosine to the 5'-cap structure of mRNAs. Binds RNA containing 5'-terminal GpppC. The polypeptide is mRNA cap guanine-N(7) methyltransferase (Rnmt) (Rattus norvegicus (Rat)).